We begin with the raw amino-acid sequence, 264 residues long: tRNA pseudouridine synthase A (264 aa).

D51 (nucleophile) is an active-site residue. Y109 is a substrate binding site.

The protein belongs to the tRNA pseudouridine synthase TruA family. As to quaternary structure, homodimer.

The catalysed reaction is uridine(38/39/40) in tRNA = pseudouridine(38/39/40) in tRNA. Formation of pseudouridine at positions 38, 39 and 40 in the anticodon stem and loop of transfer RNAs. The protein is tRNA pseudouridine synthase A of Vibrio cholerae serotype O1 (strain ATCC 39541 / Classical Ogawa 395 / O395).